Here is a 502-residue protein sequence, read N- to C-terminus: Glycerol kinase (502 aa).

Residue T13 coordinates ADP. ATP contacts are provided by T13, T14, and S15. T13 provides a ligand contact to sn-glycerol 3-phosphate. Residue R17 coordinates ADP. 4 residues coordinate sn-glycerol 3-phosphate: R83, E84, Y135, and D245. Residues R83, E84, Y135, D245, and Q246 each coordinate glycerol. T267 and G310 together coordinate ADP. ATP-binding residues include T267, G310, Q314, and G411. ADP is bound by residues G411 and N415.

The protein belongs to the FGGY kinase family. As to quaternary structure, homotetramer and homodimer (in equilibrium).

It carries out the reaction glycerol + ATP = sn-glycerol 3-phosphate + ADP + H(+). It participates in polyol metabolism; glycerol degradation via glycerol kinase pathway; sn-glycerol 3-phosphate from glycerol: step 1/1. With respect to regulation, activated by phosphorylation and inhibited by fructose 1,6-bisphosphate (FBP). Key enzyme in the regulation of glycerol uptake and metabolism. Catalyzes the phosphorylation of glycerol to yield sn-glycerol 3-phosphate. The sequence is that of Glycerol kinase from Lactobacillus delbrueckii subsp. bulgaricus (strain ATCC BAA-365 / Lb-18).